Consider the following 159-residue polypeptide: Small ribosomal subunit protein uS4 (159 aa).

Positions 106 to 158 (RRLQTIVYRMGLAKSIYHARQLIVHGHIAVAGRRVSSPGFLVPRELEDKISLI) constitute an S4 RNA-binding domain.

The protein belongs to the universal ribosomal protein uS4 family. Part of the 30S ribosomal subunit. Contacts protein S5. The interaction surface between S4 and S5 is involved in control of translational fidelity.

In terms of biological role, one of the primary rRNA binding proteins, it binds directly to 16S rRNA where it nucleates assembly of the body of the 30S subunit. Functionally, with S5 and S12 plays an important role in translational accuracy. This chain is Small ribosomal subunit protein uS4, found in Pyrobaculum neutrophilum (strain DSM 2338 / JCM 9278 / NBRC 100436 / V24Sta) (Thermoproteus neutrophilus).